We begin with the raw amino-acid sequence, 706 residues long: Mitochondrial intermediate peptidase, mitochondrial (706 aa).

The N-terminal 29 residues, 1-29 (MWKLTRRLQPHINSTRWLVRNFRNGGAGD), are a transit peptide targeting the mitochondrion. Residues 212 to 238 (NPTYRSTSGGSRGSTRSAHKSKQKGFR) are disordered. Residues 214-227 (TYRSTSGGSRGSTR) show a composition bias toward low complexity. His491 contacts Zn(2+). Residue Glu492 is part of the active site. 2 residues coordinate Zn(2+): His495 and Glu520.

Belongs to the peptidase M3 family. Zn(2+) is required as a cofactor.

The protein resides in the mitochondrion. Functionally, aminopeptidase which cleaves preproteins, imported into the mitochondrion, to their mature size. Could cleave both preproteins and preprotein intermediates already cleaved by the mitochondrial processing peptidase (MPP). This Arabidopsis thaliana (Mouse-ear cress) protein is Mitochondrial intermediate peptidase, mitochondrial.